The primary structure comprises 610 residues: Menin (610 aa).

The interaction with FANCD2 stretch occupies residues 214–390 (GVAERSWLYL…SLLEAGEERP (177 aa)). Disordered stretches follow at residues 385 to 404 (AGEE…GSAL) and 460 to 552 (REAE…PVLT). The span at 393 to 402 (QTQGTQSQGS) shows a compositional bias: low complexity. Residues 484–500 (RRESKPEEPPPPKKPAL) show a composition bias toward basic and acidic residues. Ser487 carries the phosphoserine modification. Pro residues-rich tracts occupy residues 512 to 521 (PGPPRKPPGT) and 537 to 548 (VPAPAASPPPEG). Ser543 is subject to Phosphoserine. Position 594 is a phosphothreonine (Thr594).

Component of the MLL-HCF complex, at least composed of KMT2A/MLL1, MEN1, ASH2L, RBBP5, DPY30, WDR5, HCFC1 and HCFC2. Component of the menin-associated histone methyltransferase complex, at least composed of KMT2B/MLL4, MEN1, ASH2L, RBBP5, DPY30 and WDR5. Interacts with POLR2B. Interacts with POLR2A phosphorylated at 'Ser-5', but not with the unphosphorylated, nor 'Ser-2' phosphorylated POLR2A forms. Interacts with FANCD2 and DBF4. Interacts with SMAD3, but not with SMAD2, nor SMAD4. Directly interacts with NFKB1, NFKB2 and RELA. Interacts with JUND (via MBM motif); inhibits the interaction of JUND with MAPK10 and the phosphorylation of JUND by MAP kinases MAPK8 and MAPK10. Interacts with KMT2A (via MBM motif). The KMT2A-MEN1 complex interacts with PSIP1 with a greater affinity as MEN1 enhances interaction of KMT2A with PSIP1.

It localises to the nucleus. Its function is as follows. Essential component of a MLL/SET1 histone methyltransferase (HMT) complex, a complex that specifically methylates 'Lys-4' of histone H3 (H3K4). Functions as a transcriptional regulator. Binds to the TERT promoter and represses telomerase expression. Plays a role in TGFB1-mediated inhibition of cell-proliferation, possibly regulating SMAD3 transcriptional activity. Represses JUND-mediated transcriptional activation on AP1 sites, as well as that mediated by NFKB subunit RELA. Positively regulates HOXC8 and HOXC6 gene expression. May be involved in normal hematopoiesis through the activation of HOXA9 expression. May be involved in DNA repair. The sequence is that of Menin (MEN1) from Bos taurus (Bovine).